We begin with the raw amino-acid sequence, 402 residues long: MLPYTLIQEADDRLRKRVRRTELIHSHHFSEKLGIPIYFKCENLQRTGAFKIRGALNFMTSQPREALAKGVITASAGNHAQGVAFSADLLGVPSTVFMPESTPPQKVFATRDYGAEVVLTGRNFDEAYAAAVQAQEERGALFVHPFDDPLVMAGQGTIGLEVLQELPDVANILVPIGGGGLIAGIATAIRETHPHVRIIGVETAAAPSAHYSLQKGKIVQVPVTVTLADGIAVKKPGVNTFPIIRDLVDEVVLVEEEEIALAIVALLERTKLLVEGAGAVPLAALLNRRVTDLSGKTVCVLSGGNIDVKTISVVVERGLVAAGRYLKLKVELDDLPGALARLATEIAEAKANISIITHDRRSKSLPIGKTEVLIELETRGFEHIQEVISHLQGVGYLVDVLK.

Lysine 51 bears the N6-(pyridoxal phosphate)lysine mark. Residues asparagine 78, 178 to 181, and serine 302 contribute to the pyridoxal 5'-phosphate site; that span reads GGGL. One can recognise an ACT domain in the interval 327-402; the sequence is KLKVELDDLP…GVGYLVDVLK (76 aa).

The protein belongs to the serine/threonine dehydratase family. Requires pyridoxal 5'-phosphate as cofactor.

The enzyme catalyses L-threonine = 2-oxobutanoate + NH4(+). It catalyses the reaction L-serine = pyruvate + NH4(+). It functions in the pathway amino-acid biosynthesis; L-isoleucine biosynthesis; 2-oxobutanoate from L-threonine: step 1/1. Functionally, catalyzes the conversion of threonine to 2-oxobutanoate and ammonia. Functions in the threonine-dependent pathway of isoleucine biosynthesis, which is the minor pathway for isoleucine biosynthesis in G.sulfurreducens. Also displays serine ammonia-lyase activity, yielding pyruvate from L-serine. In Geobacter sulfurreducens (strain ATCC 51573 / DSM 12127 / PCA), this protein is L-threonine ammonia-lyase.